The primary structure comprises 279 residues: Probable endonuclease 4 (279 aa).

The Zn(2+) site is built by H74, H112, E147, D180, H183, H214, D227, H229, and E259.

The protein belongs to the AP endonuclease 2 family. Zn(2+) serves as cofactor.

It carries out the reaction Endonucleolytic cleavage to 5'-phosphooligonucleotide end-products.. Its function is as follows. Endonuclease IV plays a role in DNA repair. It cleaves phosphodiester bonds at apurinic or apyrimidinic (AP) sites, generating a 3'-hydroxyl group and a 5'-terminal sugar phosphate. The protein is Probable endonuclease 4 of Mycoplasma mobile (strain ATCC 43663 / 163K / NCTC 11711) (Mesomycoplasma mobile).